Here is a 116-residue protein sequence, read N- to C-terminus: Large ribosomal subunit protein uL18 (116 aa).

This sequence belongs to the universal ribosomal protein uL18 family. In terms of assembly, part of the 50S ribosomal subunit; part of the 5S rRNA/L5/L18/L25 subcomplex. Contacts the 5S and 23S rRNAs.

Functionally, this is one of the proteins that bind and probably mediate the attachment of the 5S RNA into the large ribosomal subunit, where it forms part of the central protuberance. This Novosphingobium aromaticivorans (strain ATCC 700278 / DSM 12444 / CCUG 56034 / CIP 105152 / NBRC 16084 / F199) protein is Large ribosomal subunit protein uL18.